A 519-amino-acid polypeptide reads, in one-letter code: Cyclic AMP-responsive element-binding protein 3-like protein 2 (519 aa).

Residues 1–374 are Cytoplasmic-facing; that stretch reads MEIMDSGEPF…SCRVTGTQTS (374 aa). Disordered regions lie at residues 58–77, 85–121, and 193–261; these read GRGD…PVPP, YSLC…MEQE, and GLEC…SGPL. The span at 109 to 119 shows a compositional bias: acidic residues; it reads ADSESDEWPME. Composition is skewed to low complexity over residues 205–217 and 240–249; these read SSVG…SQSP and PSSLSSSPLL. The region spanning 291 to 354 is the bZIP domain; the sequence is ALKKIRRKIK…KSLLQQLHSL (64 aa). Positions 293–322 are basic motif; the sequence is KKIRRKIKNKISAQESRRKKKEYVDALEKK. The tract at residues 333–354 is leucine-zipper; sequence LRRKVENLECTNKSLLQQLHSL. A helical; Signal-anchor for type II membrane protein membrane pass occupies residues 375–395; sequence TCLMVVVLCFSLFLGSFYPGL. The Lumenal segment spans residues 396–519; that stretch reads SPCSSITKAD…QLDRTVNETS (124 aa). The short motif at 423–426 is the S1P recognition element; the sequence is RSLL. N-linked (GlcNAc...) asparagine glycans are attached at residues N485, N503, and N516.

This sequence belongs to the bZIP family. ATF subfamily. In terms of assembly, binds DNA as a dimer. In terms of processing, upon ER stress, translocated to the Golgi apparatus, where it is processed by regulated intramembrane proteolysis (RIP) to release the cytosol-facing N-terminal transcription factor domain. The cleavage is performed sequentially by site-1 and site-2 proteases (S1P/mbtps1 and S2P/mbtps2).

The protein localises to the endoplasmic reticulum membrane. It is found in the nucleus. Its function is as follows. Transcription factor involved in unfolded protein response (UPR). In the absence of endoplasmic reticulum (ER) stress, inserted into ER membranes, with N-terminal DNA-binding and transcription activation domains oriented toward the cytosolic face of the membrane. In response to ER stress, transported to the Golgi, where it is cleaved in a site-specific manner by resident proteases S1P/mbtps1 and S2P/mbtps2. The released N-terminal cytosolic domain is translocated to the nucleus to effect transcription of specific target genes. Plays a critical role in chondrogenesis. May protect neuroblastoma cells from ER stress-induced death. In vitro activates transcription of target genes via direct binding to the CRE site. The protein is Cyclic AMP-responsive element-binding protein 3-like protein 2 (creb3l2) of Danio rerio (Zebrafish).